We begin with the raw amino-acid sequence, 130 residues long: Small ribosomal subunit protein uS9 (130 aa).

It belongs to the universal ribosomal protein uS9 family.

This chain is Small ribosomal subunit protein uS9, found in Syntrophobacter fumaroxidans (strain DSM 10017 / MPOB).